A 349-amino-acid polypeptide reads, in one-letter code: 2-oxoglutarate-Fe(II) type oxidoreductase hxnY (349 aa).

One can recognise a Fe2OG dioxygenase domain in the interval 178–282; sequence GVATMRMLHY…RYSIPFFFSG (105 aa). Residues H205, D207, and H263 each contribute to the Fe cation site. R273 serves as a coordination point for 2-oxoglutarate.

This sequence belongs to the iron/ascorbate-dependent oxidoreductase family. It depends on Fe(2+) as a cofactor.

Its function is as follows. 2-oxoglutarate-Fe(II) type oxidoreductase, part of the hnx cluster involved in the purine degradation. The nicotinate hydroxylase hnxS accepts nicotinate as a substrate and catalyzes the first step of nicotinate catabolism. The major facilitator-type transporters hxnP and hxnZ are probably involved in the uptake of nicotinate-derived metabolites, and the oxidoreductases hxnT and hxnY in the further metabolism of 6-OH nicotinic acid. The polypeptide is 2-oxoglutarate-Fe(II) type oxidoreductase hxnY (Emericella nidulans (strain FGSC A4 / ATCC 38163 / CBS 112.46 / NRRL 194 / M139) (Aspergillus nidulans)).